The chain runs to 282 residues: 5'-adenylylsulfate reductase-like 2 (282 aa).

An N-terminal signal peptide occupies residues 1–19 (MRWWPALPLLLLAVAVAGA). The Thioredoxin domain occupies 20 to 159 (GDAAPVCTRP…LAAFYNDVSG (140 aa)). Residue asparagine 134 is glycosylated (N-linked (GlcNAc...) asparagine). Residues 205–225 (AASFVILRLLYLFYPKITAFV) form a helical membrane-spanning segment.

It is found in the membrane. The polypeptide is 5'-adenylylsulfate reductase-like 2 (APRL2) (Oryza sativa subsp. japonica (Rice)).